Reading from the N-terminus, the 240-residue chain is MSLFPSLHLLLLIVMTASHTETENCEDIQNTCLVISCDSPGINGLPGKDGLDGAKGEKGEPGQGLIGLQGLPGMVGPQGSPGIPGLPGLKGQKGDSGIDPGNSLANLRSELDNIKKWLIFAQGKQVGKKLYLTNGKKMSFNGVKALCAQFQASVATPTNSRENQAIQELAGTEAFLGITDEYTEGQFVDLTGKRVRYQNWNDGEPNNADSAEHCVEILKDGKWNDIFCSSQLSAVCEFPA.

An N-terminal signal peptide occupies residues 1-18; it reads MSLFPSLHLLLLIVMTAS. Collagen-like domains lie at 39–61 and 67–97; these read SPGI…KGEP and GLQG…GDSG. At P46 the chain carries Hydroxyproline. The interval 48–102 is disordered; that stretch reads KDGLDGAKGEKGEPGQGLIGLQGLPGMVGPQGSPGIPGLPGLKGQKGDSGIDPGN. Residues 49–60 are compositionally biased toward basic and acidic residues; the sequence is DGLDGAKGEKGE. 3 positions are modified to hydroxyproline: P72, P81, and P87. Positions 104 to 122 form a coiled coil; it reads LANLRSELDNIKKWLIFAQ. Positions 126–237 constitute a C-type lectin domain; that stretch reads VGKKLYLTNG…CSSQLSAVCE (112 aa). Disulfide bonds link C147-C236 and C214-C228.

As to quaternary structure, interacts with MASP1 and MASP2. Interacts with MEP1A and MEP1B and may inhibit their catalytic activity. Forms oligomeric complexes of 2 or 3 homotrimers. Expressed in liver. Weakly expressed in kidney and testis.

The protein resides in the secreted. Functionally, calcium-dependent lectin involved in innate immune defense. Binds mannose, fucose and N-acetylglucosamine on different microorganisms and activates the lectin complement pathway. Binds to late apoptotic cells, as well as to apoptotic blebs and to necrotic cells, but not to early apoptotic cells, facilitating their uptake by macrophages. According to some authors, it only binds mannose. This is Mannose-binding protein C from Sus scrofa (Pig).